We begin with the raw amino-acid sequence, 99 residues long: NADH-quinone oxidoreductase subunit K (99 aa).

3 helical membrane-spanning segments follow: residues 3 to 23 (PANY…GVLV), 28 to 48 (IVVF…LVTF), and 62 to 82 (FFVM…ILAI).

This sequence belongs to the complex I subunit 4L family. As to quaternary structure, NDH-1 is composed of 14 different subunits. Subunits NuoA, H, J, K, L, M, N constitute the membrane sector of the complex.

The protein resides in the cell membrane. The catalysed reaction is a quinone + NADH + 5 H(+)(in) = a quinol + NAD(+) + 4 H(+)(out). Its function is as follows. NDH-1 shuttles electrons from NADH, via FMN and iron-sulfur (Fe-S) centers, to quinones in the respiratory chain. The immediate electron acceptor for the enzyme in this species is believed to be a menaquinone. Couples the redox reaction to proton translocation (for every two electrons transferred, four hydrogen ions are translocated across the cytoplasmic membrane), and thus conserves the redox energy in a proton gradient. The sequence is that of NADH-quinone oxidoreductase subunit K from Parafrankia sp. (strain EAN1pec).